We begin with the raw amino-acid sequence, 302 residues long: Probable 2-(5''-triphosphoribosyl)-3'-dephosphocoenzyme-A synthase 1 (302 aa).

Belongs to the CitG/MdcB family.

The catalysed reaction is 3'-dephospho-CoA + ATP = 2'-(5''-triphospho-alpha-D-ribosyl)-3'-dephospho-CoA + adenine. The polypeptide is Probable 2-(5''-triphosphoribosyl)-3'-dephosphocoenzyme-A synthase 1 (Salmonella paratyphi A (strain ATCC 9150 / SARB42)).